The following is a 253-amino-acid chain: Adapter protein MecA (253 aa).

It belongs to the MecA family. As to quaternary structure, homodimer.

In terms of biological role, enables the recognition and targeting of unfolded and aggregated proteins to the ClpC protease or to other proteins involved in proteolysis. This chain is Adapter protein MecA, found in Streptococcus pyogenes serotype M6 (strain ATCC BAA-946 / MGAS10394).